Here is a 71-residue protein sequence, read N- to C-terminus: DNA gyrase inhibitor YacG (71 aa).

Zn(2+) is bound by residues C7, C10, C26, and C30.

Belongs to the DNA gyrase inhibitor YacG family. In terms of assembly, interacts with GyrB. Zn(2+) is required as a cofactor.

In terms of biological role, inhibits all the catalytic activities of DNA gyrase by preventing its interaction with DNA. Acts by binding directly to the C-terminal domain of GyrB, which probably disrupts DNA binding by the gyrase. The chain is DNA gyrase inhibitor YacG from Shewanella amazonensis (strain ATCC BAA-1098 / SB2B).